The primary structure comprises 463 residues: Probable Xaa-Pro aminopeptidase pepP (463 aa).

The Mn(2+) site is built by D259, D270, E393, and E433.

Belongs to the peptidase M24B family. Mn(2+) serves as cofactor.

The catalysed reaction is Release of any N-terminal amino acid, including proline, that is linked to proline, even from a dipeptide or tripeptide.. In terms of biological role, catalyzes the removal of a penultimate prolyl residue from the N-termini of peptides. In Pyrenophora teres f. teres (strain 0-1) (Barley net blotch fungus), this protein is Probable Xaa-Pro aminopeptidase pepP (pepP).